Consider the following 373-residue polypeptide: D-alanine--D-alanine ligase (373 aa).

The ATP-grasp domain occupies 156–363 (KKLWSAAGLP…YPTLLATMVE (208 aa)). 184-239 (LQRLGLPAYVKPARGGSSIGVSRVSSFDELPAAIAAARRHDPKVIVEAAINGRELE) contributes to the ATP binding site. Mg(2+) is bound by residues D318, E330, and N332.

It belongs to the D-alanine--D-alanine ligase family. Mg(2+) serves as cofactor. The cofactor is Mn(2+).

The protein localises to the cytoplasm. The enzyme catalyses 2 D-alanine + ATP = D-alanyl-D-alanine + ADP + phosphate + H(+). Its pathway is cell wall biogenesis; peptidoglycan biosynthesis. In terms of biological role, cell wall formation. The polypeptide is D-alanine--D-alanine ligase (Mycobacterium ulcerans (strain Agy99)).